The primary structure comprises 463 residues: Trigger factor (463 aa).

The region spanning 162-243 is the PPIase FKBP-type domain; that stretch reads GDHVSIDLSA…VHSVKLKELP (82 aa). Residues 427–444 are compositionally biased toward polar residues; it reads SGNTIEPPTPVHTETITV. The interval 427–463 is disordered; sequence SGNTIEPPTPVHTETITVASGDEETEESAAEQGETEK.

Belongs to the FKBP-type PPIase family. Tig subfamily.

The protein resides in the cytoplasm. The enzyme catalyses [protein]-peptidylproline (omega=180) = [protein]-peptidylproline (omega=0). In terms of biological role, involved in protein export. Acts as a chaperone by maintaining the newly synthesized protein in an open conformation. Functions as a peptidyl-prolyl cis-trans isomerase. The polypeptide is Trigger factor (Thermobifida fusca (strain YX)).